Reading from the N-terminus, the 356-residue chain is Histidinol-phosphate aminotransferase (356 aa).

Lysine 214 is modified (N6-(pyridoxal phosphate)lysine).

It belongs to the class-II pyridoxal-phosphate-dependent aminotransferase family. Histidinol-phosphate aminotransferase subfamily. As to quaternary structure, homodimer. It depends on pyridoxal 5'-phosphate as a cofactor.

The enzyme catalyses L-histidinol phosphate + 2-oxoglutarate = 3-(imidazol-4-yl)-2-oxopropyl phosphate + L-glutamate. The protein operates within amino-acid biosynthesis; L-histidine biosynthesis; L-histidine from 5-phospho-alpha-D-ribose 1-diphosphate: step 7/9. This Shigella boydii serotype 18 (strain CDC 3083-94 / BS512) protein is Histidinol-phosphate aminotransferase.